A 734-amino-acid polypeptide reads, in one-letter code: MALRFPRFSQGLAQDPTTRRIWFGIATAHDFESHDDITEERLYQNIFASHFGQLAIIFLWTSGNLFHVAWQGNFELWVQDPLHVRPIAHAIWDPHFGQPAVEAFTRGGALGPVNIAYSGVYQWWYTIGLRTNEDLYTGALFLLFLSAISLIAGWLHLQPKWKPSVSWFKNAESRLNHHLSGLFGVSSLAWTGHLVHVAIPASRGEYVRWNNFLDVLPHPQGLGPLFTGQWNLYAQNPDSSSHLFGTAQGAGTAILTLLGGFHPQTQSLWLTDIAHHHLAIAFIFLVAGHMYRTNFGIGHSMKDLLDAHIPPGGRLGRGHEGLYDTINNSLHFQLGLALASLGVITSLVAQHMYSLPAYAFIAQDFTTQAALYTHHQYIAGFIMTGAFAHGAIFFIRDYNPEQNEDNVLARMLEHKEAIISHLSWASLFLGFHTLGLYVHNDVMLAFGTPEKQILIEPIFAQWIQSAHGKTSYGFDVLLSSTSGPAFNAGRSIWLPGWLNAVNENSNSLFLTIGPGDFLVHHAIALGLHTTTLILVKGALDARGSKLMPDKKDFGYSFPCDGPGRGGTCDISAWDAFYLAVFWMLNTIGWVTFYWHWKHITLWQGNVSQFNESSTYLMGWLRDYLWLNSSQLINGYNPFGMNSLSVWAWMFLFGHLVWATGFMFLISWRGYWQELIETLAWAHERTPLANLIRWRDKPVALSIVQARLVGLVHFSVGYIFTYAAFLIASTSGKFG.

8 consecutive transmembrane segments (helical) span residues 46-69 (IFAS…FHVA), 135-158 (LYTG…LHLQ), 175-199 (LNHH…HVAI), 273-291 (IAHH…GHMY), 330-353 (LHFQ…QHMY), 369-395 (AALY…IFFI), 417-439 (AIIS…LYVH), and 517-535 (FLVH…LILV). The [4Fe-4S] cluster site is built by Cys-559 and Cys-568. 2 helical membrane passes run 575–596 (AFYL…YWHW) and 643–665 (LSVW…MFLI). 3 residues coordinate chlorophyll a: His-654, Met-662, and Tyr-670. Trp-671 contributes to the phylloquinone binding site. The helical transmembrane segment at 707 to 727 (LVGLVHFSVGYIFTYAAFLIA) threads the bilayer.

Belongs to the PsaA/PsaB family. The PsaA/B heterodimer binds the P700 chlorophyll special pair and subsequent electron acceptors. PSI consists of a core antenna complex that captures photons, and an electron transfer chain that converts photonic excitation into a charge separation. The eukaryotic PSI reaction center is composed of at least 11 subunits. Requires P700 is a chlorophyll a/chlorophyll a' dimer, A0 is one or more chlorophyll a, A1 is one or both phylloquinones and FX is a shared 4Fe-4S iron-sulfur center. as cofactor.

Its subcellular location is the plastid. It localises to the chloroplast thylakoid membrane. The enzyme catalyses reduced [plastocyanin] + hnu + oxidized [2Fe-2S]-[ferredoxin] = oxidized [plastocyanin] + reduced [2Fe-2S]-[ferredoxin]. Its function is as follows. PsaA and PsaB bind P700, the primary electron donor of photosystem I (PSI), as well as the electron acceptors A0, A1 and FX. PSI is a plastocyanin-ferredoxin oxidoreductase, converting photonic excitation into a charge separation, which transfers an electron from the donor P700 chlorophyll pair to the spectroscopically characterized acceptors A0, A1, FX, FA and FB in turn. Oxidized P700 is reduced on the lumenal side of the thylakoid membrane by plastocyanin. In Nicotiana tomentosiformis (Tobacco), this protein is Photosystem I P700 chlorophyll a apoprotein A2.